The chain runs to 299 residues: MDCKILVLGAGGLGCEILKNLTMLSFVKQVHIVDIDTIELTNLNRQFLFCDKDIGKPKAQVAAQYVNTRFPQLEVVAHVQDLTTLPPSFYKDFQFIISGLDAIEPRRFINETLVKLTLESNYEICIPFIDGGTEGLKGHVKTIIPGITACWECSIDTLPSQQDTVPMCTIANNPRCIEHVVEYVSTIQYPDLNIESTADMEFLLEKCCERAAQFSISTEKLSTSFILGIIKSIIPSVSTTNAMVAATCCTQMVKIYNDLIDLENGNNFTLINCSEGCFMYSFKFERLPDCTVCSNSNSN.

12–37 serves as a coordination point for ATP; it reads GLGCEILKNLTMLSFVKQVHIVDIDT. C168 serves as the catalytic Glycyl thioester intermediate.

This sequence belongs to the ubiquitin-activating E1 family. UBA3 subfamily. Heterodimer of UBA3 and ULA1. Interacts with NEDD8 and UBC12.

It catalyses the reaction ATP + [NEDD8 protein] + [E1 NEDD8-activating enzyme]-L-cysteine = AMP + diphosphate + [E1 NEDD8-activating enzyme]-S-[NEDD8 protein]-yl-L-cysteine.. It participates in protein modification; protein neddylation. In terms of biological role, catalytic subunit of the dimeric UBA3-ULA1 E1 enzyme. E1 activates NEDD8/RUB1 by first adenylating its C-terminal glycine residue with ATP, thereafter linking this residue to the side chain of the catalytic cysteine, yielding a NEDD8-UBA3 thioester and free AMP. E1 finally transfers NEDD8 to the catalytic cysteine of UBC12. In Saccharomyces cerevisiae (strain ATCC 204508 / S288c) (Baker's yeast), this protein is NEDD8-activating enzyme E1 catalytic subunit (UBA3).